Consider the following 150-residue polypeptide: Putative FAD-linked sulfhydryl oxidase 088R (150 aa).

The ERV/ALR sulfhydryl oxidase domain occupies 24-128; sequence GPFGPSGFGP…VTLQKAICIY (105 aa). A disulfide bridge connects residues cysteine 74 and cysteine 77.

FAD serves as cofactor.

It carries out the reaction 2 R'C(R)SH + O2 = R'C(R)S-S(R)CR' + H2O2. Functionally, FAD-dependent sulfhydryl oxidase that catalyzes disulfide bond formation. In Dryophytes versicolor (chameleon treefrog), this protein is Putative FAD-linked sulfhydryl oxidase 088R.